Reading from the N-terminus, the 220-residue chain is MKTGDKQFAVIGLGRFGLAVCKELQDSGSQVLAVDINEDRVKEAAGFVSQAIVANCTHEETVAELKLDDYDMVMIAIGADVNASILATLIAKEAGVKSVWVKANDRFQARVLQKIGADHIIMPERDMGIRVARKMLDKRVLEFHPLGSGLAMTEFVVGSRLMGKTLSDLALCKVEGVQVLGYKRGPEIIKAPDMSTTLEIGDLIIVVGPQDKLANKLKSL.

The RCK N-terminal domain maps to 5–121; it reads DKQFAVIGLG…LQKIGADHII (117 aa). Residues R15, 35 to 37, 55 to 56, 77 to 79, 102 to 104, and E124 contribute to the ATP site; these read DIN, NC, IGA, and KAN. An RCK C-terminal domain is found at 138-220; it reads KRVLEFHPLG…DKLANKLKSL (83 aa).

The protein belongs to the KtrA potassium transport family. In terms of assembly, the uptake system is composed of KtrA and KtrB.

It localises to the cell inner membrane. With respect to regulation, requires both ATP and a high membrane potential for activity. Binding of ATP causes a conformational change in KtrA, which promotes formation of the KtrAB complex. Can also bind, with lower affinity, other nucleotides such as NADH or NAD(+), but only ATP can induce a conformational change. In terms of biological role, part of the Na(+)-dependent high affinity K(+) uptake system KtrAB. KtrA is the regulatory subunit and plays an important role in the substrate specificity and transport mechanism of the system. Binds ATP but lacks ATPase activity. The polypeptide is Ktr system potassium uptake protein A (ktrA) (Vibrio alginolyticus).